The sequence spans 567 residues: 2-succinyl-5-enolpyruvyl-6-hydroxy-3-cyclohexene-1-carboxylate synthase (567 aa).

It belongs to the TPP enzyme family. MenD subfamily. Homodimer. Mg(2+) is required as a cofactor. It depends on Mn(2+) as a cofactor. Thiamine diphosphate serves as cofactor.

The catalysed reaction is isochorismate + 2-oxoglutarate + H(+) = 5-enolpyruvoyl-6-hydroxy-2-succinyl-cyclohex-3-ene-1-carboxylate + CO2. Its pathway is quinol/quinone metabolism; 1,4-dihydroxy-2-naphthoate biosynthesis; 1,4-dihydroxy-2-naphthoate from chorismate: step 2/7. It functions in the pathway quinol/quinone metabolism; menaquinone biosynthesis. Catalyzes the thiamine diphosphate-dependent decarboxylation of 2-oxoglutarate and the subsequent addition of the resulting succinic semialdehyde-thiamine pyrophosphate anion to isochorismate to yield 2-succinyl-5-enolpyruvyl-6-hydroxy-3-cyclohexene-1-carboxylate (SEPHCHC). In Yersinia pseudotuberculosis serotype I (strain IP32953), this protein is 2-succinyl-5-enolpyruvyl-6-hydroxy-3-cyclohexene-1-carboxylate synthase.